We begin with the raw amino-acid sequence, 145 residues long: Large ribosomal subunit protein uL11 (145 aa).

It belongs to the universal ribosomal protein uL11 family. Part of the ribosomal stalk of the 50S ribosomal subunit. Interacts with L10 and the large rRNA to form the base of the stalk. L10 forms an elongated spine to which L12 dimers bind in a sequential fashion forming a multimeric L10(L12)X complex. In terms of processing, one or more lysine residues are methylated.

Its function is as follows. Forms part of the ribosomal stalk which helps the ribosome interact with GTP-bound translation factors. This Rickettsia prowazekii (strain Madrid E) protein is Large ribosomal subunit protein uL11.